A 989-amino-acid chain; its full sequence is Mediator of RNA polymerase II transcription subunit 24 (989 aa).

6 short sequence motifs (LXXLL motif) span residues 343–347 (LTPLL), 359–363 (LSLLL), 447–451 (LDLLL), 556–560 (LVALL), 787–791 (LPRLL), and 857–861 (LMRLL).

Belongs to the Mediator complex subunit 24 family. In terms of assembly, component of the Mediator complex.

It is found in the nucleus. In terms of biological role, component of the Mediator complex, a coactivator involved in the regulated transcription of nearly all RNA polymerase II-dependent genes. Mediator functions as a bridge to convey information from gene-specific regulatory proteins to the basal RNA polymerase II transcription machinery. Mediator is recruited to promoters by direct interactions with regulatory proteins and serves as a scaffold for the assembly of a functional preinitiation complex with RNA polymerase II and the general transcription factors. Required for proliferation of enteric nervous system precursors. Required for the development of dopaminergic amacrine cells and rod photoreceptor cells in the retina. This is Mediator of RNA polymerase II transcription subunit 24 (med24) from Danio rerio (Zebrafish).